The primary structure comprises 306 residues: Palmitoyl-protein thioesterase 1 (306 aa).

The first 27 residues, 1-27 (MASSSCLWLLALAFLLGSCASLALGHL), serve as a signal peptide directing secretion. 3 disulfide bridges follow: C45–C46, C96–C128, and C152–C160. S115 is an active-site residue. N-linked (GlcNAc...) asparagine glycans are attached at residues N197, N212, and N232. Residues D233 and H289 contribute to the active site.

The protein belongs to the palmitoyl-protein thioesterase family. As to quaternary structure, interacts with CLN5, ATP5F1A and ATP5F1B. In terms of processing, glycosylated. As to expression, spleen, brain, seminal vesicle, and testis. Lower levels of activity in liver, heart, lung, and skeletal muscle.

It localises to the lysosome. The protein localises to the secreted. Its subcellular location is the golgi apparatus. The protein resides in the endoplasmic reticulum. The enzyme catalyses S-hexadecanoyl-L-cysteinyl-[protein] + H2O = L-cysteinyl-[protein] + hexadecanoate + H(+). The catalysed reaction is hexadecanoyl-CoA + H2O = hexadecanoate + CoA + H(+). It catalyses the reaction S-hexadecanoyl-N-acetylcysteamine + H2O = N-acetylcysteamine + hexadecanoate + H(+). It carries out the reaction S-hexadecanoyl-N-acetylcysteine methyl ester + H2O = N-acetylcysteine methyl ester + hexadecanoate + H(+). Palmitoylation reduces PPT1 enzymatic activity. Has thioesterase activity against fatty acid thioesters with 14 -18 carbons, including palmitoyl-CoA, S-palmitoyl-N-acetylcysteamine, and palmitoylated proteins. In contrast to PPT2, PPT1 can hydrolyze palmitoylated proteins and palmitoylcysteine. This chain is Palmitoyl-protein thioesterase 1 (PPT1), found in Bos taurus (Bovine).